The primary structure comprises 164 residues: Phosphopantetheine adenylyltransferase (164 aa).

Residue Ser11 coordinates substrate. Residues 11-12 (SF) and His19 contribute to the ATP site. 3 residues coordinate substrate: Lys43, Leu75, and Arg89. Residues 90-92 (GLR), Glu100, and 125-131 (YGYLSSS) contribute to the ATP site.

This sequence belongs to the bacterial CoaD family. As to quaternary structure, homohexamer. The cofactor is Mg(2+).

The protein localises to the cytoplasm. The catalysed reaction is (R)-4'-phosphopantetheine + ATP + H(+) = 3'-dephospho-CoA + diphosphate. It participates in cofactor biosynthesis; coenzyme A biosynthesis; CoA from (R)-pantothenate: step 4/5. Functionally, reversibly transfers an adenylyl group from ATP to 4'-phosphopantetheine, yielding dephospho-CoA (dPCoA) and pyrophosphate. The sequence is that of Phosphopantetheine adenylyltransferase from Geobacter sulfurreducens (strain ATCC 51573 / DSM 12127 / PCA).